We begin with the raw amino-acid sequence, 366 residues long: GTP cyclohydrolase 1 type 2 homolog (366 aa).

His-64, His-65, Asp-102, His-326, and Glu-329 together coordinate Zn(2+).

It belongs to the GTP cyclohydrolase I type 2/NIF3 family. In terms of assembly, homohexamer.

The polypeptide is GTP cyclohydrolase 1 type 2 homolog (Staphylococcus aureus (strain MSSA476)).